Reading from the N-terminus, the 93-residue chain is Integration host factor subunit beta (93 aa).

The protein belongs to the bacterial histone-like protein family. Heterodimer of an alpha and a beta chain.

Its function is as follows. This protein is one of the two subunits of integration host factor, a specific DNA-binding protein that functions in genetic recombination as well as in transcriptional and translational control. In Vibrio parahaemolyticus serotype O3:K6 (strain RIMD 2210633), this protein is Integration host factor subunit beta.